The sequence spans 357 residues: Protein ATP1B4 (357 aa).

Over 1 to 110 (MRRQLRSRRA…FLARTGQSWS (110 aa)) the chain is Nuclear. The disordered stretch occupies residues 15-80 (YSYRYRLDDP…EEGQGQPTGN (66 aa)). Residues 52-73 (EEEEEEEEKEEEEEEEKEEEEG) show a composition bias toward acidic residues. The chain crosses the membrane as a helical; Signal-anchor for type II membrane protein span at residues 111 to 131 (LILLIYFFFYASLAAVITLCM). Over 132–357 (YTLFLTISPY…RVIFTLNIET (226 aa)) the chain is Perinuclear space.

This sequence belongs to the X(+)/potassium ATPases subunit beta family. As to quaternary structure, associates with a SMAD7-transcriptional complex. Interacts with SNW1 and TOR1AIP1. According to PubMed:17592128, does not associate with known Na,K-ATPase alpha-subunits. In terms of tissue distribution, highly expressed in skeletal muscle and at a lower level in heart.

It is found in the nucleus inner membrane. May act as a transcriptional coregulator during muscle development through its interaction with SNW1. Has lost its ancestral function as a Na,K-ATPase beta-subunit. The sequence is that of Protein ATP1B4 (ATP1B4) from Homo sapiens (Human).